The following is a 364-amino-acid chain: Fructose-bisphosphate aldolase B (364 aa).

A2 is subject to N-acetylalanine. At K13 the chain carries N6-succinyllysine. S36 is subject to Phosphoserine. A Phosphothreonine modification is found at T39. Beta-D-fructose 1,6-bisphosphate is bound at residue R43. T119 is modified (phosphothreonine). An N6-succinyllysine modification is found at K121. S132 carries the phosphoserine modification. Catalysis depends on E188, which acts as the Proton acceptor. The active-site Schiff-base intermediate with dihydroxyacetone-P is K230. S272, S276, S299, and S301 each carry phosphoserine. 272 to 274 lines the beta-D-fructose 1,6-bisphosphate pocket; it reads SGG. A beta-D-fructose 1,6-bisphosphate-binding site is contributed by R304. Residue S309 is modified to Phosphoserine. K317 carries the post-translational modification N6-succinyllysine.

It belongs to the class I fructose-bisphosphate aldolase family. As to quaternary structure, homotetramer. Interacts with BBS1, BBS2, BBS4 and BBS7. Forms a ternary complex with G6PD and TP53; this interaction is direct.

It is found in the cytoplasm. The protein localises to the cytosol. It localises to the cytoskeleton. Its subcellular location is the microtubule organizing center. The protein resides in the centrosome. It is found in the centriolar satellite. The enzyme catalyses beta-D-fructose 1,6-bisphosphate = D-glyceraldehyde 3-phosphate + dihydroxyacetone phosphate. It carries out the reaction beta-D-fructose 1-phosphate = D-glyceraldehyde + dihydroxyacetone phosphate. The protein operates within carbohydrate degradation; glycolysis; D-glyceraldehyde 3-phosphate and glycerone phosphate from D-glucose: step 4/4. It functions in the pathway carbohydrate biosynthesis; gluconeogenesis. It participates in carbohydrate metabolism; fructose metabolism. In terms of biological role, catalyzes the aldol cleavage of fructose 1,6-biphosphate to form two triosephosphates dihydroxyacetone phosphate and D-glyceraldehyde 3-phosphate in glycolysis as well as the reverse stereospecific aldol addition reaction in gluconeogenesis. In fructolysis, metabolizes fructose 1-phosphate derived from the phosphorylation of dietary fructose by fructokinase into dihydroxyacetone phosphate and D-glyceraldehyde. Acts as an adapter independently of its enzymatic activity, exerts a tumor suppressor role by stabilizing the ternary complex with G6PD and TP53 to inhibit G6PD activity and keep oxidative pentose phosphate metabolism in check. The protein is Fructose-bisphosphate aldolase B (ALDOB) of Ovis aries (Sheep).